The chain runs to 311 residues: Glycine--tRNA ligase alpha subunit (311 aa).

This sequence belongs to the class-II aminoacyl-tRNA synthetase family. Tetramer of two alpha and two beta subunits.

Its subcellular location is the cytoplasm. The enzyme catalyses tRNA(Gly) + glycine + ATP = glycyl-tRNA(Gly) + AMP + diphosphate. The protein is Glycine--tRNA ligase alpha subunit of Bradyrhizobium diazoefficiens (strain JCM 10833 / BCRC 13528 / IAM 13628 / NBRC 14792 / USDA 110).